Reading from the N-terminus, the 144-residue chain is Putative RNase YutE (144 aa).

Arg-96 is an active-site residue. The short motif at Arg-96–Tyr-103 is the RX(4)HXY motif element.

It belongs to the HepT RNase toxin family. Homodimer, probably forms a complex with cognate antitoxin YutD.

Its function is as follows. Probable toxic component of a putative type VII toxin-antitoxin (TA) system, probably an RNase. Probably neutralized by cognate antitoxin YutD. The protein is Putative RNase YutE (yutE) of Bacillus subtilis (strain 168).